We begin with the raw amino-acid sequence, 505 residues long: AMP phosphorylase 2 (505 aa).

AMP-binding positions include glycine 169, 195–200 (SRAITT), threonine 204, serine 265, and lysine 289.

The protein belongs to the thymidine/pyrimidine-nucleoside phosphorylase family. Type 2 subfamily.

It carries out the reaction AMP + phosphate = alpha-D-ribose 1,5-bisphosphate + adenine. The catalysed reaction is CMP + phosphate = cytosine + alpha-D-ribose 1,5-bisphosphate. It catalyses the reaction UMP + phosphate = alpha-D-ribose 1,5-bisphosphate + uracil. Its function is as follows. Catalyzes the conversion of AMP and phosphate to adenine and ribose 1,5-bisphosphate (R15P). Exhibits phosphorylase activity toward CMP and UMP in addition to AMP. Functions in an archaeal AMP degradation pathway, together with R15P isomerase and RubisCO. The polypeptide is AMP phosphorylase 2 (Archaeoglobus fulgidus (strain ATCC 49558 / DSM 4304 / JCM 9628 / NBRC 100126 / VC-16)).